The sequence spans 1235 residues: DNA polymerase catalytic subunit (1235 aa).

Disordered regions lie at residues 640-693 and 1098-1134; these read QGRF…AGRH and AAAP…ASKP. Residues 650–661 are compositionally biased toward basic and acidic residues; the sequence is APKRPAAAREDE. The span at 662–675 shows a compositional bias: acidic residues; that stretch reads ERPEEEGEDEDERE. The span at 676 to 691 shows a compositional bias: basic and acidic residues; it reads EGGGEREPEGARETAG.

Belongs to the DNA polymerase type-B family. Forms a complex with the ssDNA-binding protein UL29, the DNA polymerase processivity factor, and the alkaline exonuclease. Interacts with the putative helicase-primase complex subunit UL8; this interaction may coordinate leading and lagging strand DNA synthesis at the replication fork.

The protein localises to the host nucleus. It carries out the reaction DNA(n) + a 2'-deoxyribonucleoside 5'-triphosphate = DNA(n+1) + diphosphate. It catalyses the reaction Endonucleolytic cleavage to 5'-phosphomonoester.. Functionally, replicates viral genomic DNA. The replication complex is composed of six viral proteins: the DNA polymerase, processivity factor, primase, primase-associated factor, helicase, and ssDNA-binding protein. Additionally, the polymerase contains an intrinsic ribonuclease H (RNase H) activity that specifically degrades RNA/DNA heteroduplexes or duplex DNA substrates in the 5' to 3' direction. Therefore, it can catalyze the excision of the RNA primers that initiate the synthesis of Okazaki fragments at a replication fork during viral DNA replication. This Human herpesvirus 1 (strain KOS) (HHV-1) protein is DNA polymerase catalytic subunit.